The primary structure comprises 852 residues: RNA-binding protein 10 (852 aa).

2 stretches are compositionally biased toward basic and acidic residues: residues 1–14 (MEYERRGGRGDRTG) and 21–45 (RSQDDGGENRSRDHDYRDMDYRSYP). The tract at residues 1–78 (MEYERRGGRG…RGQLQSHGVQ (78 aa)) is disordered. The RRM 1 domain occupies 37–132 (RDMDYRSYPR…QKVSMHYSDP (96 aa)). Ser61 carries the post-translational modification Phosphoserine. The RanBP2-type zinc finger occupies 135–165 (KINEDWLCNKCGVQNFKRREKCFKCGVPKSE). The RRM 2 domain occupies 223-307 (DTIILRNLNP…KTINVEFAKG (85 aa)). Lys306 is modified (N6-acetyllysine). 6 disordered regions span residues 343–365 (GGESTWAAPEEPPVDYSYYQQDE), 386–410 (KGPGMTGTKGDTSGAGPETSLEGGT), 426–446 (APGLYQQSAEGSSGQGTATNS), 459–489 (SELQSPTHPSSALPPATSPTAPESYSQYPVP), 542–568 (EQSADGHKDTGASSKEGKEKKEKHKTK), and 634–675 (DLPK…EEKL). Over residues 430-446 (YQQSAEGSSGQGTATNS) the composition is skewed to polar residues. Residues 463-484 (SPTHPSSALPPATSPTAPESYS) are compositionally biased toward low complexity. The segment covering 545–561 (ADGHKDTGASSKEGKEK) has biased composition (basic and acidic residues). Phosphoserine occurs at positions 640, 645, 655, 658, and 660. Basic and acidic residues predominate over residues 665–675 (ERGGPEREEKL). The segment at 681–706 (LACLLCRRQFPSKEALIRHQQLSGLH) adopts a C2H2-type; atypical zinc-finger fold. Phosphoserine is present on residues Ser703, Ser719, and Ser767. Residues 740 to 783 (AAERREKYGIPEPPEPKRRKYGGISTASVDFEQPTRDGLGSDNI) form a disordered region. Residues 780 to 826 (SDNIGSRMLQAMGWKEGSGLGRKKQGIVTPIEAQTRVRGSGLGARGS) form the G-patch domain. The residue at position 824 (Arg824) is an Omega-N-methylarginine.

In terms of assembly, associates with the spliceosome. Component of a large chromatin remodeling complex, at least composed of MYSM1, PCAF, RBM10 and KIF11/TRIP5.

It localises to the nucleus. Binds to ssRNA containing the consensus sequence 5'-AGGUAA-3'. May be involved in post-transcriptional processing, most probably in mRNA splicing. Binds to RNA homopolymers, with a preference for poly(G) and poly(U) and little for poly(A). May bind to specific miRNA hairpins. The protein is RNA-binding protein 10 of Rattus norvegicus (Rat).